A 158-amino-acid polypeptide reads, in one-letter code: Putative ribonucleoside-diphosphate reductase small chain B (158 aa).

The protein belongs to the ribonucleoside diphosphate reductase small chain family.

The chain is Putative ribonucleoside-diphosphate reductase small chain B (RNR2B) from Arabidopsis thaliana (Mouse-ear cress).